The chain runs to 344 residues: Meiotic recombination protein DMC1 homolog B (344 aa).

Residue 133-140 (GEFRSGKT) coordinates ATP. Position 235 (R235) interacts with dsDNA. R235, F238, R241, R247, and R315 together coordinate ssDNA. Positions 241 and 247 each coordinate dsDNA.

This sequence belongs to the RecA family. DMC1 subfamily. In terms of tissue distribution, highly expressed in spikelets. Expressed in meiotic young panicles.

Its subcellular location is the nucleus. Its function is as follows. Recombinase that may participate in meiotic recombination, specifically in homologous strand assimilation, which is required for the resolution of meiotic double-strand breaks. Exhibits DNA-dependent ATPase activity when bound to single-stranded DNA (ssDNA). Mediates renaturation of homologous complementary strands as well as assimilation of single strands into homologous supercoiled duplexes leading to D-loop formation. Binds circular single-stranded DNA (ssDNA) and circular double-stranded DNA (dsDNA) in vitro. Catalyzes DNA homologous renaturation and DNA strand exchange. The rates of these activities are dependent on the state of ATP hydrolysis. Forms helical filaments along ssDNA and dsDNA, and promotes strand exchange between ssDNA and dsDNA with long DNA substrates of several thousand base pairs. The presence of the replication protein A is not required for this activity. Seems to be required for homologous pairing and subsequent chromosome segregation during male meiosis. May be not directly required for homologous pairing during male meiosis. Required for synaptonemal complex assembly and crossover formation. Functions redundantly with DMC1A. This is Meiotic recombination protein DMC1 homolog B from Oryza sativa subsp. japonica (Rice).